The sequence spans 539 residues: MSTTSSSGRIAADQNNKCVNSVAAALCPLSNCQFSGVVISAITDEQKLEFSNKYNSSCTLSCSYDSQGVLLRIMLDNDQGHVLKEYMISADTDAAQLGRRCYAISLESDNLVLRFVSDKDQQLFRKVVENVKHLRPKSVFSQRTEESSASQYFQFYGYLSQQQNMMQDYVRTSTYQRAILGNAIDFQDKVVLDVGAGSGILSFFAVQAGAAKVYAIEASNMAQYAQQLVESNNVQHKISVIPGKIEEIELPEKVDVIISEPMGYMLYNERMLETYLHARKWLKPHGKMYPTHGDLHIAPFSDESLYSEQYNKANFWYQSAFHGVDLTTLHKEGMKEYFRQPIVDTFDIRICMAKSVRHVCDFLNDKEDDLHVIDIPLEFHILQTGICHGLAFWFDVEFSGSSQNVWLSTSPTAPLTHWYQVRCLLPMPIFIKQGQTLTGRVLLEANRRQSYDVTIDLHIEGTLISSSNTLDLKNPYFRYTGAPVQAPPGTNTQSPSEQYWTQMDTQGNRNSNSMLNGTLSVNGMGDGSMDITHGLLHPH.

Positions 149–458 (ASQYFQFYGY…QSYDVTIDLH (310 aa)) constitute an SAM-dependent MTase PRMT-type domain. The S-adenosyl-L-methionine site is built by glutamine 162, arginine 171, glycine 195, glutamate 217, glutamate 246, and threonine 274. Position 509 is an asymmetric dimethylarginine; by autocatalysis (arginine 509).

This sequence belongs to the class I-like SAM-binding methyltransferase superfamily. Protein arginine N-methyltransferase family. Homodimer. Post-translationally, the dimethylated protein is the major form.

The protein resides in the cytoplasm. It localises to the nucleus. The catalysed reaction is L-arginyl-[protein] + 2 S-adenosyl-L-methionine = N(omega),N(omega)-dimethyl-L-arginyl-[protein] + 2 S-adenosyl-L-homocysteine + 2 H(+). Its function is as follows. Methylates (mono- and asymmetric dimethylation) the guanidino nitrogens of arginyl residues in proteins. May methylate histone H3 at 'Arg-17' and activate transcription via chromatin remodeling. The protein is Histone-arginine methyltransferase CARMER (Art4) of Drosophila mojavensis (Fruit fly).